Consider the following 99-residue polypeptide: Large ribosomal subunit protein bL27 (99 aa).

A propeptide spanning residues 1 to 9 (MLIMNLQLF) is cleaved from the precursor.

The protein belongs to the bacterial ribosomal protein bL27 family. The N-terminus is cleaved by ribosomal processing cysteine protease Prp.

The polypeptide is Large ribosomal subunit protein bL27 (Clostridium botulinum (strain Eklund 17B / Type B)).